The chain runs to 444 residues: Ribosomal protein uS12 methylthiotransferase RimO (444 aa).

One can recognise an MTTase N-terminal domain in the interval 4–118 (YKIGLISLGC…IQNYIDDFFN (115 aa)). Positions 13, 48, 81, 155, 159, and 162 each coordinate [4Fe-4S] cluster. Positions 141 to 371 (TTAKHMAYIR…MSIQQNVSSK (231 aa)) constitute a Radical SAM core domain. Residues 374–440 (KNKLEKVYKV…EYDLIGVVCD (67 aa)) form the TRAM domain.

The protein belongs to the methylthiotransferase family. RimO subfamily. [4Fe-4S] cluster serves as cofactor.

Its subcellular location is the cytoplasm. It catalyses the reaction L-aspartate(89)-[ribosomal protein uS12]-hydrogen + (sulfur carrier)-SH + AH2 + 2 S-adenosyl-L-methionine = 3-methylsulfanyl-L-aspartate(89)-[ribosomal protein uS12]-hydrogen + (sulfur carrier)-H + 5'-deoxyadenosine + L-methionine + A + S-adenosyl-L-homocysteine + 2 H(+). In terms of biological role, catalyzes the methylthiolation of an aspartic acid residue of ribosomal protein uS12. The protein is Ribosomal protein uS12 methylthiotransferase RimO of Clostridium novyi (strain NT).